A 447-amino-acid chain; its full sequence is Gamma-glutamyl phosphate reductase (447 aa).

It belongs to the gamma-glutamyl phosphate reductase family.

The protein localises to the cytoplasm. The catalysed reaction is L-glutamate 5-semialdehyde + phosphate + NADP(+) = L-glutamyl 5-phosphate + NADPH + H(+). It functions in the pathway amino-acid biosynthesis; L-proline biosynthesis; L-glutamate 5-semialdehyde from L-glutamate: step 2/2. Catalyzes the NADPH-dependent reduction of L-glutamate 5-phosphate into L-glutamate 5-semialdehyde and phosphate. The product spontaneously undergoes cyclization to form 1-pyrroline-5-carboxylate. The protein is Gamma-glutamyl phosphate reductase of Methanosarcina mazei (strain ATCC BAA-159 / DSM 3647 / Goe1 / Go1 / JCM 11833 / OCM 88) (Methanosarcina frisia).